Reading from the N-terminus, the 416-residue chain is Hepatic and glial cell adhesion molecule (416 aa).

The signal sequence occupies residues 1-33 (MKRERGALSRASRALRLAPFVYLLLIQTDPLEG). One can recognise an Ig-like V-type domain in the interval 34-142 (VNITSPVRLI…GEKTINLTVD (109 aa)). Residues 34-240 (VNITSPVRLI…VKITVYRRSS (207 aa)) are Extracellular-facing. 4 N-linked (GlcNAc...) asparagine glycosylation sites follow: N35, N138, N167, and N189. An Ig-like C2-type domain is found at 148–234 (PQVLVASTTV…QGRSLPVKIT (87 aa)). C168 and C217 are joined by a disulfide. A helical membrane pass occupies residues 241-261 (LYIILSTGGIFLLVTLVTVCA). Topologically, residues 262-416 (CWKPSKRKQK…DEAGPVEISA (155 aa)) are cytoplasmic. The segment at 273–416 (LEKQNSLEYM…DEAGPVEISA (144 aa)) is disordered. Phosphoserine is present on S278. A compositionally biased stretch (basic and acidic residues) spans 285-306 (NDDRLKPEADTLPRSGEQERKN). S350 and S377 each carry phosphoserine. The segment covering 383–398 (SSPGRSRSASRTLRTA) has biased composition (low complexity).

As to quaternary structure, homodimer. Dimer formation occurs predominantly through cis interactions on the cell surface. Part of a complex containing MLC1, TRPV4, AQP4 and ATP1B1. Interacts with CLCN2. Post-translationally, N-glycosylated.

It localises to the cytoplasm. The protein localises to the cell membrane. In terms of biological role, involved in regulating cell motility and cell-matrix interactions. May inhibit cell growth through suppression of cell proliferation. In glia, associates and targets CLCN2 at astrocytic processes and myelinated fiber tracts where it may regulate transcellular chloride flux involved in neuron excitability. In Homo sapiens (Human), this protein is Hepatic and glial cell adhesion molecule.